The primary structure comprises 99 residues: Aspartyl/glutamyl-tRNA(Asn/Gln) amidotransferase subunit C (99 aa).

The protein belongs to the GatC family. Heterotrimer of A, B and C subunits.

The enzyme catalyses L-glutamyl-tRNA(Gln) + L-glutamine + ATP + H2O = L-glutaminyl-tRNA(Gln) + L-glutamate + ADP + phosphate + H(+). It carries out the reaction L-aspartyl-tRNA(Asn) + L-glutamine + ATP + H2O = L-asparaginyl-tRNA(Asn) + L-glutamate + ADP + phosphate + 2 H(+). Allows the formation of correctly charged Asn-tRNA(Asn) or Gln-tRNA(Gln) through the transamidation of misacylated Asp-tRNA(Asn) or Glu-tRNA(Gln) in organisms which lack either or both of asparaginyl-tRNA or glutaminyl-tRNA synthetases. The reaction takes place in the presence of glutamine and ATP through an activated phospho-Asp-tRNA(Asn) or phospho-Glu-tRNA(Gln). This chain is Aspartyl/glutamyl-tRNA(Asn/Gln) amidotransferase subunit C, found in Burkholderia ambifaria (strain MC40-6).